A 267-amino-acid polypeptide reads, in one-letter code: Apolipoprotein A-I (267 aa).

A signal peptide spans 1-18 (MKAAVLTLAVLFLTGSQA). Repeat copies occupy residues 68–89 (LKLL…EDLG) and 90–111 (PVTQ…QEMS). Positions 68–267 (LKLLDNWDSL…EEYAKKLSSQ (200 aa)) are 10 X approximate tandem repeats. Methionine 110 bears the Methionine sulfoxide mark. A 3; half-length repeat occupies 112 to 122 (KDLEEVKAKVQ). A run of 5 repeats spans residues 123-144 (PYLD…QKLE), 145-166 (PLRT…EKLS), 167-188 (PLAE…TQLA), 189-210 (PYSD…ESGG), and 211-232 (ASLA…EKAK). One copy of the 9; half-length repeat lies at 233 to 243 (PALEDLRQGLL). Copy 10 of the repeat occupies 244–267 (PVLESFKVSFLSALEEYAKKLSSQ).

The protein belongs to the apolipoprotein A1/A4/E family. Homodimer. Interacts with APOA1BP and CLU. Component of a sperm activating protein complex (SPAP), consisting of APOA1, an immunoglobulin heavy chain, an immunoglobulin light chain and albumin. Interacts with NDRG1. Interacts with SCGB3A2. Interacts with NAXE and YJEFN3. Post-translationally, glycosylated. In terms of processing, palmitoylated. Phosphorylation sites are present in the extracellular medium.

The protein resides in the secreted. Its function is as follows. Participates in the reverse transport of cholesterol from tissues to the liver for excretion by promoting cholesterol efflux from tissues and by acting as a cofactor for the lecithin cholesterol acyltransferase (LCAT). As part of the SPAP complex, activates spermatozoa motility. This chain is Apolipoprotein A-I (APOA1), found in Cebus imitator (Panamanian white-faced capuchin).